A 254-amino-acid chain; its full sequence is Probable glucose-1-phosphate cytidylyltransferase (254 aa).

Substrate is bound by residues 6–10 (LCGGK), 11–13 (GTR), K23, T103, R108, and G126. 2 residues coordinate Mg(2+): D127 and D232.

Belongs to the glucose-1-phosphate cytidylyltransferase family. Mg(2+) serves as cofactor.

The enzyme catalyses alpha-D-glucose 1-phosphate + CTP + H(+) = CDP-D-glucose + diphosphate. Its function is as follows. Catalyzes the transfer of a CMP moiety from CTP to glucose 1-phosphate. This chain is Probable glucose-1-phosphate cytidylyltransferase (yfnH), found in Bacillus subtilis (strain 168).